We begin with the raw amino-acid sequence, 461 residues long: Coronin-1A (461 aa).

At serine 2 the chain carries N-acetylserine. The residue at position 2 (serine 2) is a Phosphoserine; by PKC. 7 WD repeats span residues 13 to 63, 73 to 110, 123 to 160, 164 to 204, 207 to 251, 258 to 296, and 302 to 349; these read HVFG…LVLP, NVPMVCGHTAPVLDIAWCPHNDNVIASGSEDCSVMVWE, PVVTLEGHTKRVGIVAWHPTAQNVLLSAGCDNVILVWD, GVAV…RIIE, KGTI…ALWD, PLSLQELDTSSGVLLPFFDPDTNIVYLCGKGDSSIRYFE, and PFLH…EPIA. Basic and acidic residues predominate over residues 404–418; the sequence is LRVNRGLDTGRKRTT. Residues 404–429 are disordered; the sequence is LRVNRGLDTGRKRTTPEASGAPSSDA. Threonine 412 carries the phosphothreonine; by PKC modification. A Phosphothreonine modification is found at threonine 418. Residue serine 422 is modified to Phosphoserine. Residues 424 to 460 adopt a coiled-coil conformation; the sequence is APSSDAISRLEEEMRKLQATVQELQKRLDRLEETVQA. Position 449 is an N6-acetyllysine (lysine 449).

It belongs to the WD repeat coronin family. In terms of assembly, binds actin. Phosphorylation at Thr-412 by PKC strongly down-regulates the association with actin. In terms of processing, polyubiquitinated by RNF128 with 'Lys-48'-linked chains, leading to proteasomal degradation. In terms of tissue distribution, expressed in brain, thymus, spleen, bone marrow and lymph node. Low in lung and gut.

The protein localises to the cytoplasm. It is found in the cytoskeleton. The protein resides in the cell cortex. It localises to the cytoplasmic vesicle. Its subcellular location is the phagosome membrane. Functionally, may be a crucial component of the cytoskeleton of highly motile cells, functioning both in the invagination of large pieces of plasma membrane, as well as in forming protrusions of the plasma membrane involved in cell locomotion. In mycobacteria-infected macrophages, its retention on the phagosomal membrane prevents fusion between phagosomes and lysosomes. The sequence is that of Coronin-1A (CORO1A) from Bos taurus (Bovine).